A 376-amino-acid chain; its full sequence is Cyclin-dependent kinase 9 (376 aa).

One can recognise a Protein kinase domain in the interval 19–319 (YERLAKIGQG…SDDALNHDFF (301 aa)). Residues 25-33 (IGQGTFGEV) and lysine 48 contribute to the ATP site. Catalysis depends on aspartate 153, which acts as the Proton acceptor. Residues 345–376 (PPRRRGGHMPQQPANQARNPAATNQSEFDRVF) form a disordered region. A compositionally biased stretch (low complexity) spans 354–369 (PQQPANQARNPAATNQ).

This sequence belongs to the protein kinase superfamily. CMGC Ser/Thr protein kinase family. CDC2/CDKX subfamily. As to quaternary structure, associates with cyclin-T to form P-TEFb.

Its subcellular location is the nucleus. The catalysed reaction is L-seryl-[protein] + ATP = O-phospho-L-seryl-[protein] + ADP + H(+). It carries out the reaction L-threonyl-[protein] + ATP = O-phospho-L-threonyl-[protein] + ADP + H(+). It catalyses the reaction [DNA-directed RNA polymerase] + ATP = phospho-[DNA-directed RNA polymerase] + ADP + H(+). Its function is as follows. Member of the cyclin-dependent kinase pair (CDK9/cyclin-T) complex, also called positive transcription elongation factor B (P-TEFb), which is proposed to facilitate the transition from abortive to production elongation by phosphorylating the CTD (C-terminal domain) of the large subunit of RNA polymerase II (RNAP II) and SUPT5H. This is Cyclin-dependent kinase 9 (cdk9) from Xenopus tropicalis (Western clawed frog).